The primary structure comprises 361 residues: Ankyrin repeat domain-containing protein 16 (361 aa).

ANK repeat units lie at residues 36 to 66 (AGDT…DIEA), 70 to 99 (DYKR…AVDC), 103 to 132 (ADWT…NPLL), 136 to 165 (DGWN…GAWK), 170 to 200 (IRRT…EPDY), 204 to 234 (CGVT…CLSA), 238 to 268 (LGAQ…DVDV), 273 to 302 (THLT…DINS), and 306 to 335 (KNRS…KDSE).

Interacts with AARS; the interaction is direct.

It is found in the cytoplasm. It localises to the nucleus. Required to prevent the misactivation of serine (Ser) with tRNA(Ala) by promoting the hydrolysis of Ser-mischarged tRNA(Ala), thereby playing a role in translational fidelity. Binds directly to the catalytic domain of AARS/AlaRS and captures Ser that is misactivated by AARS/AlaRS, preventing the charging of Ser adenylates to tRNA(Ala) and precluding Ser misincorporation in nascent peptides. This chain is Ankyrin repeat domain-containing protein 16, found in Homo sapiens (Human).